A 139-amino-acid chain; its full sequence is Large ribosomal subunit protein uL14A (139 aa).

This sequence belongs to the universal ribosomal protein uL14 family. In terms of assembly, component of the large ribosomal subunit (LSU). Mature yeast ribosomes consist of a small (40S) and a large (60S) subunit. The 40S small subunit contains 1 molecule of ribosomal RNA (18S rRNA) and at least 33 different proteins. The large 60S subunit contains 3 rRNA molecules (25S, 5.8S and 5S rRNA) and at least 46 different proteins.

It localises to the cytoplasm. The protein resides in the nucleus. Its function is as follows. Component of the ribosome, a large ribonucleoprotein complex responsible for the synthesis of proteins in the cell. The small ribosomal subunit (SSU) binds messenger RNAs (mRNAs) and translates the encoded message by selecting cognate aminoacyl-transfer RNA (tRNA) molecules. The large subunit (LSU) contains the ribosomal catalytic site termed the peptidyl transferase center (PTC), which catalyzes the formation of peptide bonds, thereby polymerizing the amino acids delivered by tRNAs into a polypeptide chain. The nascent polypeptides leave the ribosome through a tunnel in the LSU and interact with protein factors that function in enzymatic processing, targeting, and the membrane insertion of nascent chains at the exit of the ribosomal tunnel. The chain is Large ribosomal subunit protein uL14A (rpl2301) from Schizosaccharomyces pombe (strain 972 / ATCC 24843) (Fission yeast).